We begin with the raw amino-acid sequence, 133 residues long: uncharacterized protein (133 aa).

Transmembrane regions (helical) follow at residues 8–28 (MVLL…LLLL) and 46–66 (SFSI…SIGA).

It localises to the membrane. This is an uncharacterized protein from Saccharomyces cerevisiae (strain ATCC 204508 / S288c) (Baker's yeast).